Consider the following 424-residue polypeptide: L-threonine:uridine-5'-aldehyde transaldolase (424 aa).

An N6-(pyridoxal phosphate)lysine modification is found at Lys-235.

It belongs to the SHMT family. It depends on pyridoxal 5'-phosphate as a cofactor.

The enzyme catalyses uridine-5'-aldehyde + L-threonine = (5'S,6'S)-C-glycyluridine + acetaldehyde. It participates in antibiotic biosynthesis. Functionally, transaldolase involved in the biosynthesis of the lipopeptidyl nucleoside antibiotic A-90289. Catalyzes the condensation of L-threonine and uridine-5'-aldehyde to form 5'-C-glycyluridine (GlyU). Forms (5'S,6'S)-GlyU. Has no activity with alternative amino acids, such as glycine or serine. The chain is L-threonine:uridine-5'-aldehyde transaldolase from Streptomyces sp.